The following is a 119-amino-acid chain: uncharacterized protein (119 aa).

The N-terminal stretch at Met-1 to Gly-30 is a signal peptide.

This is an uncharacterized protein from Escherichia coli (strain UTI89 / UPEC).